A 452-amino-acid chain; its full sequence is Heat shock protein 83 (452 aa).

R124 provides a ligand contact to ATP. Residues 448–452 carry the TPR repeat-binding motif; sequence MEQVD.

It belongs to the heat shock protein 90 family. As to quaternary structure, homodimer.

The protein localises to the cytoplasm. Its function is as follows. Molecular chaperone that promotes the maturation, structural maintenance and proper regulation of specific target proteins involved for instance in cell cycle control and signal transduction. Undergoes a functional cycle that is linked to its ATPase activity. This cycle probably induces conformational changes in the client proteins, thereby causing their activation. Interacts dynamically with various co-chaperones that modulate its substrate recognition, ATPase cycle and chaperone function. The sequence is that of Heat shock protein 83 (HSP83) from Leishmania donovani.